We begin with the raw amino-acid sequence, 179 residues long: Cytochrome b6-f complex iron-sulfur subunit (179 aa).

A helical membrane pass occupies residues 20–42 (LLTFGTITGVAAGALYPIVKYFI). The 102-residue stretch at 60-161 (GNDVIVSQFL…ANVTDNDKVV (102 aa)) folds into the Rieske domain. Residues cysteine 107, histidine 109, cysteine 125, and histidine 128 each contribute to the [2Fe-2S] cluster site. A disulfide bond links cysteine 112 and cysteine 127.

It belongs to the Rieske iron-sulfur protein family. The 4 large subunits of the cytochrome b6-f complex are cytochrome b6, subunit IV (17 kDa polypeptide, PetD), cytochrome f and the Rieske protein, while the 4 small subunits are PetG, PetL, PetM and PetN. The complex functions as a dimer. [2Fe-2S] cluster serves as cofactor.

The protein resides in the cellular thylakoid membrane. It carries out the reaction 2 oxidized [plastocyanin] + a plastoquinol + 2 H(+)(in) = 2 reduced [plastocyanin] + a plastoquinone + 4 H(+)(out). In terms of biological role, component of the cytochrome b6-f complex, which mediates electron transfer between photosystem II (PSII) and photosystem I (PSI), cyclic electron flow around PSI, and state transitions. The polypeptide is Cytochrome b6-f complex iron-sulfur subunit (Microcystis aeruginosa (strain NIES-843 / IAM M-2473)).